The primary structure comprises 81 residues: Conotoxin ArMKLT2-01 (81 aa).

The N-terminal stretch at 1–19 (MKLTCVIIVVALFLTACHA) is a signal peptide. The propeptide occupies 20-43 (KDKQEHPAVRGSDDMQDSEDLKLA). Intrachain disulfides connect Cys46/Cys61, Cys53/Cys65, and Cys60/Cys74.

Belongs to the conotoxin O1 superfamily. In terms of tissue distribution, expressed by the venom duct.

The protein resides in the secreted. This is Conotoxin ArMKLT2-01 from Conus arenatus (Sand-dusted cone).